The chain runs to 663 residues: MIDKRDFKAFKLVSKYAPSGDQPQAIETLVDNIEGGEKAQILLGATGTGKTYTMSQVISKVNKPTLVVAHNKTLAGQLYGEFKEFFPENAVEYFVSYYDYYQPEAYVPSSDTYIEKDSSVNDEIDKLRHSATSSLLERNDVIVVASVSCIYGLGSPKEYADSAVSLRPGQEISRDQLLNALVDIQFERNDIDFQRGRFRVRGDVVEVFPASRDEHAFRIEFFGDEIDRIREIESLTGKVLGDADHLVLFPATHFVTNDEHMEQSISKIQAELADQLKLFEAEGKLLEAQRLRQRTEYDIEMLREMGYTNGVENYSRHMDGRSAGEPPYTLLDFFPDDFLIMIDESHMTMGQIKGMYNGDKARKQMLVDYGFRLPSALDNRPLRREEFESHVHQIVYVSATPGDYEMEQTDTIVEQIIRPTGLLDPEVEVRPSMGQMDDLLGEINLRVERGERTFITTLTKKMAEDLTDYLKEMGVKVKYMHSDIKTLERTEIIRDLRLGVFDVLIGINLLREGIDVPEVSLVAILDADKEGFLRNERGLIQTIGRAARNADGHVIMYADRMTDSMQRAIDETARRRAIQMAYNEEHGIIPQTIKKDIRDLISISRAVEAKATEAETNYESMTRSERQEAIKQLQKNMQEAAELLDFELAAQLRDLILELKAMD.

In terms of domain architecture, Helicase ATP-binding spans 31–271 (DNIEGGEKAQ…EQSISKIQAE (241 aa)). Position 44–51 (44–51 (GATGTGKT)) interacts with ATP. A Beta-hairpin motif is present at residues 97–120 (YYDYYQPEAYVPSSDTYIEKDSSV). Residues 435–601 (QMDDLLGEIN…TIKKDIRDLI (167 aa)) form the Helicase C-terminal domain. The 36-residue stretch at 627–662 (QEAIKQLQKNMQEAAELLDFELAAQLRDLILELKAM) folds into the UVR domain.

The protein belongs to the UvrB family. As to quaternary structure, forms a heterotetramer with UvrA during the search for lesions. Interacts with UvrC in an incision complex.

The protein resides in the cytoplasm. In terms of biological role, the UvrABC repair system catalyzes the recognition and processing of DNA lesions. A damage recognition complex composed of 2 UvrA and 2 UvrB subunits scans DNA for abnormalities. Upon binding of the UvrA(2)B(2) complex to a putative damaged site, the DNA wraps around one UvrB monomer. DNA wrap is dependent on ATP binding by UvrB and probably causes local melting of the DNA helix, facilitating insertion of UvrB beta-hairpin between the DNA strands. Then UvrB probes one DNA strand for the presence of a lesion. If a lesion is found the UvrA subunits dissociate and the UvrB-DNA preincision complex is formed. This complex is subsequently bound by UvrC and the second UvrB is released. If no lesion is found, the DNA wraps around the other UvrB subunit that will check the other stand for damage. This is UvrABC system protein B from Streptococcus equi subsp. equi (strain 4047).